The chain runs to 325 residues: ATP phosphoribosyltransferase (325 aa).

Belongs to the ATP phosphoribosyltransferase family. Long subfamily. Requires Mg(2+) as cofactor.

The protein resides in the cytoplasm. The enzyme catalyses 1-(5-phospho-beta-D-ribosyl)-ATP + diphosphate = 5-phospho-alpha-D-ribose 1-diphosphate + ATP. Its pathway is amino-acid biosynthesis; L-histidine biosynthesis; L-histidine from 5-phospho-alpha-D-ribose 1-diphosphate: step 1/9. Its activity is regulated as follows. Feedback inhibited by histidine. In terms of biological role, catalyzes the condensation of ATP and 5-phosphoribose 1-diphosphate to form N'-(5'-phosphoribosyl)-ATP (PR-ATP). Has a crucial role in the pathway because the rate of histidine biosynthesis seems to be controlled primarily by regulation of HisG enzymatic activity. In Nitrobacter hamburgensis (strain DSM 10229 / NCIMB 13809 / X14), this protein is ATP phosphoribosyltransferase.